Here is a 169-residue protein sequence, read N- to C-terminus: Large ribosomal subunit protein uL5 (169 aa).

This sequence belongs to the universal ribosomal protein uL5 family. Part of the 50S ribosomal subunit; contacts the 5S rRNA and probably tRNA. Forms a bridge to the 30S subunit in the 70S ribosome.

Its function is as follows. This is one of the proteins that bind and probably mediate the attachment of the 5S RNA into the large ribosomal subunit, where it forms part of the central protuberance. In the 70S ribosome it contacts protein S13 of the 30S subunit (bridge B1b), connecting the 2 subunits; this bridge is implicated in subunit movement. May contact the P site tRNA; the 5S rRNA and some of its associated proteins might help stabilize positioning of ribosome-bound tRNAs. The chain is Large ribosomal subunit protein uL5 from Methanosarcina mazei (strain ATCC BAA-159 / DSM 3647 / Goe1 / Go1 / JCM 11833 / OCM 88) (Methanosarcina frisia).